The following is a 444-amino-acid chain: MARKYFGTDGVRGKVGEYPITPDFVMKLGWAAGKVLSKKGTRKVLIGKDTRISGYMLESALEAGLSAAGLKAILMGPMPTPAVAYLTRTFRAEAGIVISASHNPYYDNGIKFFSADGTKLPDEVEMAIEAELDHELKCVESAELGKALRIDDAAGRYIEFCKSTFPSNLSLEGLKMVVDCGHGATYHIAPSVFRELGAEVIAIGCSPDGLNINDGVGSTAPEALAAKVLECKADLGVAFDGDGDRLVMVDNTGYIIDGDEILYIIARDALRNGRLKGGVVGTLMANMGLELALQTLGIPFARAKVGDRYVLEMMNEKGWRIGGENSGHIICLDQTTTGDGIVAALQVLTAICTAEMPLAKLRSGMNKFPQVLVNVRFAEGRDPLAADAVQQEVAKVEQELAGRGRVLLRKSGTEPLIRVMVEGEHEQQVRDMAQRIAQQVESAF.

Ser-101 (phosphoserine intermediate) is an active-site residue. Mg(2+) is bound by residues Ser-101, Asp-240, Asp-242, and Asp-244. Phosphoserine is present on Ser-101.

Belongs to the phosphohexose mutase family. Mg(2+) is required as a cofactor. In terms of processing, activated by phosphorylation.

The catalysed reaction is alpha-D-glucosamine 1-phosphate = D-glucosamine 6-phosphate. In terms of biological role, catalyzes the conversion of glucosamine-6-phosphate to glucosamine-1-phosphate. This is Phosphoglucosamine mutase from Aeromonas hydrophila subsp. hydrophila (strain ATCC 7966 / DSM 30187 / BCRC 13018 / CCUG 14551 / JCM 1027 / KCTC 2358 / NCIMB 9240 / NCTC 8049).